Consider the following 280-residue polypeptide: Pantothenate synthetase (280 aa).

31-38 (MGNLHVGH) serves as a coordination point for ATP. Catalysis depends on H38, which acts as the Proton donor. Q62 lines the (R)-pantoate pocket. Q62 is a binding site for beta-alanine. Residue 150–153 (GKKD) participates in ATP binding. Residue Q156 coordinates (R)-pantoate. ATP is bound by residues V179 and 187–190 (MSSR).

It belongs to the pantothenate synthetase family. In terms of assembly, homodimer.

The protein localises to the cytoplasm. It carries out the reaction (R)-pantoate + beta-alanine + ATP = (R)-pantothenate + AMP + diphosphate + H(+). The protein operates within cofactor biosynthesis; (R)-pantothenate biosynthesis; (R)-pantothenate from (R)-pantoate and beta-alanine: step 1/1. Its function is as follows. Catalyzes the condensation of pantoate with beta-alanine in an ATP-dependent reaction via a pantoyl-adenylate intermediate. This chain is Pantothenate synthetase, found in Xanthomonas oryzae pv. oryzae (strain MAFF 311018).